The following is a 721-amino-acid chain: Exo beta-1,2-glucooligosaccharide sophorohydrolase (non-reducing end) (721 aa).

An N-terminal signal peptide occupies residues 1–18; the sequence is MKHIALLTTLLLSASLQA. The Glycoamylase-like domain maps to 474–708; that stretch reads NHKLIGWNET…LLWNLFMSHP (235 aa).

In terms of assembly, monomer.

The protein resides in the periplasm. It catalyses the reaction [(1-&gt;2)-beta-D-glucosyl](n) + H2O = [(1-&gt;2)-beta-D-glucosyl](n-2) + sophorose. Its function is as follows. Catalyzes the hydrolysis of linear beta-1,2-glucan and beta-1,2-glucooligosaccharides with degrees of polymerization (DPs) greater than or equal to 4, to produce sophorose. The best substrates are tetra- and pentasaccharides. Acts as an exo-type enzyme that releases sophorose from the non-reducing end of the substrate. It cannot hydrolyze cyclic beta-1,2-glucans. The chain is Exo beta-1,2-glucooligosaccharide sophorohydrolase (non-reducing end) from Parabacteroides distasonis (strain ATCC 8503 / DSM 20701 / CIP 104284 / JCM 5825 / NCTC 11152).